The primary structure comprises 2109 residues: General transcription factor 3C polypeptide 1 (2109 aa).

The disordered stretch occupies residues 467 to 521 (LPEGEDTFLSESDSEEERSSSKRRGRGSQKDTRASANLRPKTQPHHSTPTKGGWK). The segment covering 469–482 (EGEDTFLSESDSEE) has biased composition (acidic residues). Lys529 is covalently cross-linked (Glycyl lysine isopeptide (Lys-Gly) (interchain with G-Cter in SUMO2)). A disordered region spans residues 586 to 609 (MENPKESSSSLKTGRHSSGQDKPH). Residue Ser667 is modified to Phosphoserine. Over residues 718–727 (STANRVKTSQ) the composition is skewed to polar residues. The interval 718–775 (STANRVKTSQPPVPQGEAEEDSQGKEGPSGSGDSQLSASSRSESGRMKKSDNKMGITP) is disordered. The residue at position 739 (Ser739) is a Phosphoserine. The segment covering 748–759 (SGDSQLSASSRS) has biased composition (low complexity). Residues 760–769 (ESGRMKKSDN) show a composition bias toward basic and acidic residues. Glycyl lysine isopeptide (Lys-Gly) (interchain with G-Cter in SUMO2) cross-links involve residues Lys770 and Lys833. Disordered stretches follow at residues 836 to 857 (SGRA…SEAP) and 1059 to 1082 (RKNS…ESAM). A phosphoserine mark is found at Ser1062 and Ser1068. Over residues 1073-1082 (SLQKEQESAM) the composition is skewed to basic and acidic residues. A Glycyl lysine isopeptide (Lys-Gly) (interchain with G-Cter in SUMO2) cross-link involves residue Lys1142. The tract at residues 1202–1241 (SLDRNRRVRGGKSQKRKRLKKDPGKKIKRKKKGEFPGEKS) is disordered. Basic residues predominate over residues 1207–1221 (RRVRGGKSQKRKRLK). Ser1253 and Ser1611 each carry phosphoserine. A disordered region spans residues 1608-1631 (KDGSLEDDEDEEDDLDEGVGGKRR). Over residues 1612 to 1624 (LEDDEDEEDDLDE) the composition is skewed to acidic residues. A phosphoserine mark is found at Ser1632 and Ser1653. The segment covering 1823–1833 (EDADIQREDPQ) has biased composition (basic and acidic residues). A disordered region spans residues 1823 to 1961 (EDADIQREDP…GSEDPRGFTE (139 aa)). Residues 1838–1848 (EGSSSEDSPPE) show a composition bias toward low complexity. Residues Ser1856, Ser1865, Ser1868, Ser1896, and Ser1911 each carry the phosphoserine modification. A compositionally biased stretch (low complexity) spans 1916 to 1926 (LEDTAAAGAAQ). The segment covering 1937–1947 (SPGQEQLSGQA) has biased composition (polar residues). Residue Ser1969 is modified to Phosphoserine.

The protein belongs to the TFIIIC subunit 1 family. Part of the TFIIIC subcomplex TFIIIC2, consisting of six subunits, GTF3C1, GTF3C2, GTF3C3, GTF3C4, GTF3C5 and GTF3C6. Interacts with IGHMBP2. Interacts with MAF1.

The protein resides in the nucleus. Functionally, required for RNA polymerase III-mediated transcription. Component of TFIIIC that initiates transcription complex assembly on tRNA and is required for transcription of 5S rRNA and other stable nuclear and cytoplasmic RNAs. Binds to the box B promoter element. This is General transcription factor 3C polypeptide 1 (GTF3C1) from Homo sapiens (Human).